The chain runs to 538 residues: Putative cysteine ligase BshC (538 aa).

The stretch at lysine 460–glutamine 483 forms a coiled coil.

The protein belongs to the BshC family.

Its function is as follows. Involved in bacillithiol (BSH) biosynthesis. May catalyze the last step of the pathway, the addition of cysteine to glucosamine malate (GlcN-Mal) to generate BSH. The sequence is that of Putative cysteine ligase BshC from Bacillus mycoides (strain KBAB4) (Bacillus weihenstephanensis).